The chain runs to 214 residues: MAEEVPVINPEEWKPRTKVGQLVKEGKITSMKEIFEKNYPITEPEIVDVLLPKLKYEVMDIKIVQKQTDAGEISKYKVLIVMGNMDGYVSYGTGKAKQLRVAIQKAIKNAKMNIIPVRRGCGSWECTCGEAHSLPFKVYGKAGSVEVLLMPAPKGTGLVVGPALKTLLTYAGIKDAWSLTRGSTYTTENFIKAGYNALYNTYKFVTPVDWMRRK.

One can recognise an S5 DRBM domain in the interval 54-117 (LKYEVMDIKI…KNAKMNIIPV (64 aa)).

It belongs to the universal ribosomal protein uS5 family. As to quaternary structure, part of the 30S ribosomal subunit. Contacts protein S4.

In terms of biological role, with S4 and S12 plays an important role in translational accuracy. This chain is Small ribosomal subunit protein uS5, found in Sulfurisphaera tokodaii (strain DSM 16993 / JCM 10545 / NBRC 100140 / 7) (Sulfolobus tokodaii).